An 89-amino-acid chain; its full sequence is MTLNTQEKQKLINTHQNHGTDTGSAEVQVAMLSERISKLSNHLQKNIHDFSSRQGLLKMIGQRKRLLNYLRDKSNKRYTDIITKLKLRG.

The interval 1-23 is disordered; that stretch reads MTLNTQEKQKLINTHQNHGTDTG.

The protein belongs to the universal ribosomal protein uS15 family. In terms of assembly, part of the 30S ribosomal subunit. Forms a bridge to the 50S subunit in the 70S ribosome, contacting the 23S rRNA.

In terms of biological role, one of the primary rRNA binding proteins, it binds directly to 16S rRNA where it helps nucleate assembly of the platform of the 30S subunit by binding and bridging several RNA helices of the 16S rRNA. Forms an intersubunit bridge (bridge B4) with the 23S rRNA of the 50S subunit in the ribosome. This chain is Small ribosomal subunit protein uS15, found in Prochlorococcus marinus (strain MIT 9211).